A 436-amino-acid polypeptide reads, in one-letter code: MRVFFKTYGCQMNLNDTETMAGILSQHGYEVVNLPEEADIVILNTCVVRQKSQEKYHSALGQFVKLKKSGKIKLIGIAGCGSNLEGEELIKSGADFVIGSRSIGKIAEVLQKAARGEKIVYLEDDICTVDSKTPRMRFSKHHAWITIIHGCNRFCTYCIVPYTRGREKSRPLPDVLLEVEKLAKNGVKEITFLGQNVDAYGKDLKDGTNLASLIEQAGKFEQIKRIWFLTSYPTDITDKLIETVAEDPKAAKSFHIPVQSGSNRILRLMNRRYDRDQFLQLVEKIRSKIPHASISSDIIVGFPTETEYDYMQTMDLVRKARFERLNLAVYSPRQGTVASKYFKDDVPREEKVQRLNKLLELQKQINRELNMQYLGKVVEIIVEGKTKEGLYYGRDIRNKVIIFSSQEVSEGENVLLKIDKITAGPLYGKLQKKCGL.

Residues M1–R115 form the MTTase N-terminal domain. Residues C10, C46, C80, C151, C155, and C158 each contribute to the [4Fe-4S] cluster site. In terms of domain architecture, Radical SAM core spans R137–E368. The 62-residue stretch at M371–K432 folds into the TRAM domain.

Belongs to the methylthiotransferase family. MiaB subfamily. Monomer. [4Fe-4S] cluster is required as a cofactor.

The protein localises to the cytoplasm. It carries out the reaction N(6)-dimethylallyladenosine(37) in tRNA + (sulfur carrier)-SH + AH2 + 2 S-adenosyl-L-methionine = 2-methylsulfanyl-N(6)-dimethylallyladenosine(37) in tRNA + (sulfur carrier)-H + 5'-deoxyadenosine + L-methionine + A + S-adenosyl-L-homocysteine + 2 H(+). Catalyzes the methylthiolation of N6-(dimethylallyl)adenosine (i(6)A), leading to the formation of 2-methylthio-N6-(dimethylallyl)adenosine (ms(2)i(6)A) at position 37 in tRNAs that read codons beginning with uridine. In Pseudothermotoga lettingae (strain ATCC BAA-301 / DSM 14385 / NBRC 107922 / TMO) (Thermotoga lettingae), this protein is tRNA-2-methylthio-N(6)-dimethylallyladenosine synthase.